Reading from the N-terminus, the 251-residue chain is Protein phosphatase 1 regulatory subunit 35 (251 aa).

2 disordered regions span residues 58–99 (LITV…QQTH) and 180–235 (PALA…VPRP). Residues 76–99 (PNKDEHGVETDREQSRECDGQQTH) show a composition bias toward basic and acidic residues.

The protein belongs to the PPP1R35 family.

It is found in the cytoplasm. The protein localises to the cytoskeleton. It localises to the microtubule organizing center. The protein resides in the centrosome. Its subcellular location is the centriole. In terms of biological role, during centriole duplication, may play a role in the centriole elongation by promoting the recruitment of the microtubule-binding elongation machinery, leading to the centriole to centrosome conversion. In addition may play a role in the primary cilia assembly. The polypeptide is Protein phosphatase 1 regulatory subunit 35 (Danio rerio (Zebrafish)).